We begin with the raw amino-acid sequence, 241 residues long: Endothelial protein C receptor (241 aa).

The first 20 residues, M1 to C20, serve as a signal peptide directing secretion. The Extracellular segment spans residues N21–S213. N-linked (GlcNAc...) asparagine glycans are attached at residues N47, N64, N139, N165, and N175. A helical transmembrane segment spans residues L214–L234. Over C235–C241 the chain is Cytoplasmic.

The protein resides in the membrane. Its function is as follows. Binds activated protein C. Enhances protein C activation by the thrombin-thrombomodulin complex; plays a role in the protein C pathway controlling blood coagulation. The sequence is that of Endothelial protein C receptor (Procr) from Rattus norvegicus (Rat).